The chain runs to 446 residues: Glutamine synthetase (446 aa).

Positions 15 to 103 (ENVKFLRLQI…LICDVYYPDG (89 aa)) constitute a GS beta-grasp domain. Residues 110 to 446 (PRYVLKRQIE…WELDRYLATY (337 aa)) form the GS catalytic domain. The Mg(2+) site is built by E134 and E136. E186 provides a ligand contact to ATP. Positions 191 and 198 each coordinate Mg(2+). L-glutamate contacts are provided by residues 242–243 (NG) and G243. A Mg(2+)-binding site is contributed by H247. S251 is an ATP binding site. Residues R300, E306, and R318 each coordinate L-glutamate. ATP contacts are provided by R318 and R323. E335 provides a ligand contact to Mg(2+). R337 contributes to the L-glutamate binding site.

This sequence belongs to the glutamine synthetase family. As to quaternary structure, interacts with GCBP (TTHA1554). It depends on Mg(2+) as a cofactor.

The protein localises to the cytoplasm. It carries out the reaction L-glutamate + NH4(+) + ATP = L-glutamine + ADP + phosphate + H(+). Activity increases by approximately two-fold in the presence of GCBP. Catalyzes the ATP-dependent biosynthesis of glutamine from glutamate and ammonia. The chain is Glutamine synthetase from Thermus thermophilus (strain ATCC 27634 / DSM 579 / HB8).